Consider the following 226-residue polypeptide: Cytidylate kinase (226 aa).

Residue 10-18 (GPAGAGKST) coordinates ATP.

This sequence belongs to the cytidylate kinase family. Type 1 subfamily.

The protein resides in the cytoplasm. The catalysed reaction is CMP + ATP = CDP + ADP. It catalyses the reaction dCMP + ATP = dCDP + ADP. The protein is Cytidylate kinase of Caldicellulosiruptor bescii (strain ATCC BAA-1888 / DSM 6725 / KCTC 15123 / Z-1320) (Anaerocellum thermophilum).